We begin with the raw amino-acid sequence, 508 residues long: Ankyrin repeat domain-containing protein 34B (508 aa).

4 ANK repeats span residues 9–38 (TDGN…YINE), 42–79 (RGET…DPNI), 83–113 (SGKS…DLSL), and 117–146 (SGYS…AKGK). The tract at residues 157–185 (PSGRHTTQHHLNMPPADMDGSHPPATPSE) is disordered. S260 is modified (phosphoserine). Position 269 is a phosphothreonine (T269). S293 is modified (phosphoserine). Positions 361–370 (GANHYSSDSQ) are enriched in polar residues. Residues 361-380 (GANHYSSDSQLAEGVTPPTV) are disordered.

It belongs to the ANKRD34 family. In terms of processing, phosphorylated. As to expression, specifically and constitutively expressed in brain (at protein level).

Its subcellular location is the cytoplasm. The protein resides in the nucleus. The chain is Ankyrin repeat domain-containing protein 34B (Ankrd34b) from Mus musculus (Mouse).